The sequence spans 118 residues: Sarafotoxin-i1 (118 aa).

An N-terminal signal peptide occupies residues 1–23; it reads MALLPRLAAGGLLLLLALAALDG. Residues 24-84 constitute a propeptide that is removed on maturation; it reads KPAPPKLLQK…LSPLRKPQPL (61 aa). 2 disulfide bridges follow: Cys85–Cys99 and Cys87–Cys95. The propeptide occupies 112–118; the sequence is PSPIQSS.

It belongs to the endothelin/sarafotoxin family. Different length molecules ranging from 15 (85-99) to 30 amino acids (85-114) have been found in the venom. In terms of tissue distribution, expressed by the venom gland.

Its subcellular location is the secreted. Vasoconstrictor activity. These toxins cause cardiac arrest probably as a result of coronary vasospasm. In terms of biological role, sarafotoxin-i3: vasoconstrictor activity. Causes cardiac arrest probably as a result of coronary vasospasm. Displays low agonistic activities towards endothelin-2 receptor (EDNRB) (displays affinity in the micromolar range). This is Sarafotoxin-i1 from Atractaspis irregularis (Variable burrowing asp).